The chain runs to 208 residues: Thymidylate kinase (208 aa).

10 to 17 contributes to the ATP binding site; sequence GIDGSGKS.

This sequence belongs to the thymidylate kinase family.

The catalysed reaction is dTMP + ATP = dTDP + ADP. In terms of biological role, phosphorylation of dTMP to form dTDP in both de novo and salvage pathways of dTTP synthesis. The chain is Thymidylate kinase from Jannaschia sp. (strain CCS1).